A 907-amino-acid polypeptide reads, in one-letter code: Glutamate receptor 1 (907 aa).

The N-terminal stretch at 1–18 is a signal peptide; it reads MPYIFAFFCTGFLGAVVG. Residues 19-536 lie on the Extracellular side of the membrane; the sequence is ANFPNNIQIG…GVFSFLDPLA (518 aa). 6 N-linked (GlcNAc...) asparagine glycosylation sites follow: Asn-63, Asn-249, Asn-257, Asn-363, Asn-401, and Asn-406. Cys-75 and Cys-323 are joined by a disulfide. L-glutamate contacts are provided by Pro-492, Thr-494, and Arg-499. A helical transmembrane segment spans residues 537–557; sequence YEIWMCIVFAYIGVSVVLFLV. The Cytoplasmic portion of the chain corresponds to 558-584; that stretch reads SRFSPYEWHSEEFEEGRDQTTSDQSNE. The segment at residues 585–600 is an intramembrane region (helical; Pore-forming); the sequence is FGIFNSLWFSLGAFMQ. The stretch at 601–603 is an intramembrane region; that stretch reads QGC. Cys-603 is lipidated: S-palmitoyl cysteine. Over 604–609 the chain is Cytoplasmic; the sequence is DISPRS. The chain crosses the membrane as a helical span at residues 610-630; that stretch reads LSGRIVGGVWWFFTLIIISSY. Over 631-805 the chain is Extracellular; that stretch reads TANLAAFLTV…DKTSALSLSN (175 aa). Ser-645 is modified (phosphoserine). Positions 668 and 669 each coordinate L-glutamate. Position 710 is a phosphoserine; by PKC (Ser-710). Glu-719 provides a ligand contact to L-glutamate. Residues Cys-732 and Cys-787 are joined by a disulfide bond. A helical membrane pass occupies residues 806–826; it reads VAGVFYILIGGLGLAMLVALI. The Cytoplasmic portion of the chain corresponds to 827–907; that stretch reads EFCYKSRSES…SGMPLGATGL (81 aa). Cys-829 carries S-palmitoyl cysteine lipidation. Residue Ser-849 is modified to Phosphoserine; by PKC, PKA and CAMK2. The disordered stretch occupies residues 857–881; that stretch reads STLPRNSGAGASGGGGSGENGRVVS. Ser-863 carries the phosphoserine; by PKC, PKA and PKG/PRKG2 modification. Gly residues predominate over residues 866 to 875; that stretch reads GASGGGGSGE. A PDZ-binding motif is present at residues 904 to 907; sequence ATGL.

The protein belongs to the glutamate-gated ion channel (TC 1.A.10.1) family. GRIA1 subfamily. As to quaternary structure, homotetramer or heterotetramer of pore-forming glutamate receptor subunits; heteromeric assembly can be the result of both receptor subtype and flip-flop forms and according the composition, one partner can be dominant with respect to the fast desensitizing current component, whereas the other can determine the steady-state component. Tetramers may be formed by the dimerization of dimers. Found in a complex with GRIA2, GRIA3, GRIA4, CNIH2, CNIH3, CACNG2, CACNG3, CACNG4, CACNG5, CACNG7 and CACNG8. Interacts with HIP1 and RASGRF2. Interacts with SYNDIG1 and GRIA2. Interacts with DLG1 (via C-terminus). Interacts with LRFN1. Interacts with PRKG2. Interacts with CNIH2 and CACNG2. Interacts with CACNG5; this interaction modulates the gating. Interacts (via C-terminus) with PDLIM4 (via LIM domain); this interaction as well as the interaction of PDLIM4 with alpha-actinin is required for their colocalization in early endosomes. Interacts with SNX27 (via PDZ domain); the interaction is required for recycling to the plasma membrane when endocytosed and prevent degradation in lysosomes. Interacts (via PDZ-binding motif) with SHANK3 (via PDZ domain). Interacts with CACNG3; associates GRIA1 with the adapter protein complex 4 (AP-4) to target GRIA1 to the somatodendritic compartment of neurons. Interacts with CACNG2; this interaction mediates traffick to the plasma membrane and modulation of desensitization. Interaction with CNIH2 and CNIH3; this interaction promotes expression at the plasma membrane and extensively modulates their gating properties by slowing deactivation and desensitization kinetics. Found in a complex with GRIA2, GRIA3, GRIA4, DLG4, CACNG8 and CNIH2. In terms of processing, phosphorylated at Ser-645. Phosphorylated at Ser-710 by PKC. Phosphorylated at Ser-849 by PKC, PKA and CAMK2. Phosphorylated at Ser-863 by PKC, PKA and PRKG2. Phosphorylation of Ser-863 is reduced by induction of long-term depression and increased by induction of long-term potentiation. Palmitoylated. Depalmitoylated by CPT1C and upon L-glutamate stimulation. ZDHHC3/GODZ specifically palmitoylates Cys-603, which leads to Golgi retention and decreased cell surface expression. In contrast, Cys-829 palmitoylation does not affect cell surface expression but regulates stimulation-dependent endocytosis. In terms of tissue distribution, detected in cerebellum (at protein level).

The protein localises to the cell membrane. It is found in the endoplasmic reticulum membrane. Its subcellular location is the postsynaptic cell membrane. It localises to the postsynaptic density membrane. The protein resides in the cell projection. The protein localises to the dendrite. It is found in the dendritic spine. Its subcellular location is the early endosome membrane. It localises to the recycling endosome membrane. The protein resides in the presynapse. The protein localises to the synapse. The catalysed reaction is Ca(2+)(in) = Ca(2+)(out). The enzyme catalyses Na(+)(in) = Na(+)(out). It carries out the reaction Mg(2+)(in) = Mg(2+)(out). It catalyses the reaction Li(+)(in) = Li(+)(out). The catalysed reaction is K(+)(in) = K(+)(out). The enzyme catalyses Sr(2+)(in) = Sr(2+)(out). Glutamate-gated receptor activity inhibited by DNQX (6,7-dinitroquinoxaline-2,3-dione). Ionotropic glutamate receptor that functions as a ligand-gated cation channel, gated by L-glutamate and glutamatergic agonists such as alpha-amino-3-hydroxy-5-methyl-4-isoxazolepropionic acid (AMPA), quisqualic acid, and kainic acid. L-glutamate acts as an excitatory neurotransmitter at many synapses in the central nervous system. Binding of the excitatory neurotransmitter L-glutamate induces a conformation change, leading to the opening of the cation channel, and thereby converts the chemical signal to an electrical impulse upon entry of monovalent and divalent cations such as sodium and calcium. The receptor then desensitizes rapidly and enters in a transient inactive state, characterized by the presence of bound agonist. In the presence of CACNG2 or CACNG4 or CACNG7 or CACNG8, shows resensitization which is characterized by a delayed accumulation of current flux upon continued application of L-glutamate. Resensitization is blocked by CNIH2 through interaction with CACNG8 in the CACNG8-containing AMPA receptors complex. Calcium (Ca(2+)) permeability depends on subunits composition and, heteromeric channels containing edited GRIA2 subunit are calcium-impermeable. Also permeable to other divalents cations such as strontium(2+) and magnesium(2+) and monovalent cations such as potassium(1+) and lithium(1+). This chain is Glutamate receptor 1, found in Rattus norvegicus (Rat).